The chain runs to 119 residues: RNA guanine-N7 methyltransferase activating subunit (119 aa).

Residues 1–55 (MSDTSEEIPNFEEMFASRFTKDDKEYQEYLKRPPESPPIVEEWNSRAGGNQRNRG) are interaction with RNMT. Residues 30 to 119 (LKRPPESPPI…HNQRPPYGYY (90 aa)) form a disordered region. Ser-36 bears the Phosphoserine mark. Residues 36–42 (SPPIVEE) carry the RNMT-activating domain motif. Residues 47–61 (AGGNQRNRGNWLQDN) show a composition bias toward polar residues. The interval 56 to 119 (NWLQDNRQFR…HNQRPPYGYY (64 aa)) is RNA-binding. Residues 62-73 (RQFRGRDNRRGW) show a composition bias toward basic and acidic residues. Arg-85 carries the omega-N-methylarginine modification. Ser-86 bears the Phosphoserine mark. Residues 89-112 (NNNYPQQRPEPYYQQQYTQYGHNQ) show a composition bias toward low complexity.

This sequence belongs to the RAM family. Interacts with RNMT; this interaction enhances mRNA binding and cap methyltransferase activity.

Its subcellular location is the nucleus. In terms of biological role, regulatory subunit of the mRNA-capping methyltransferase RNMT:RAMAC complex that methylates the N7 position of the added guanosine to the 5'-cap structure of mRNAs. Promotes the recruitment of the methyl donor, S-adenosyl-L-methionine, to RNMT. Regulates RNMT expression by a post-transcriptional stabilizing mechanism. Binds RNA. This is RNA guanine-N7 methyltransferase activating subunit (Ramac) from Mus musculus (Mouse).